The following is a 339-amino-acid chain: MamK-like protein (339 aa).

ATP is bound by residues Y18–S19, D74, A162–T164, and K216–A220.

This sequence belongs to the FtsA/MreB family. MamK subfamily. Forms cytoplasmic filament polymers. Forms filaments with MamK.

Its subcellular location is the cytoplasm. The protein localises to the cytoskeleton. The catalysed reaction is ATP + H2O = ADP + phosphate + H(+). Functionally, protein with ATPase activity which forms pole-to-pole filaments in vivo, probably with MamK. Efficient filament formation requires MamK. Probably promotes turnover of MamK filaments, by providing a monomer pool. In vivo, in the absence of its paralog MamK, forms thin filaments from pole to pole. In vitro forms straight filaments and bundles in the absence of ATP. Filament formation is triggered by KCl and MgCl(2); polymerizes more slowly and makes thinner filaments than MamK. Expression in E.coli yields a filament in the cell's longitudinal axis; the protein nucleates at one pole or the cell septum. The sequence is that of MamK-like protein from Paramagnetospirillum magneticum (strain ATCC 700264 / AMB-1) (Magnetospirillum magneticum).